We begin with the raw amino-acid sequence, 115 residues long: DNA-binding protein STK_13740 (115 aa).

It belongs to the PDCD5 family.

This chain is DNA-binding protein STK_13740, found in Sulfurisphaera tokodaii (strain DSM 16993 / JCM 10545 / NBRC 100140 / 7) (Sulfolobus tokodaii).